A 145-amino-acid chain; its full sequence is MVIIQNNIHDLSVNEDDLSCILQKVVKEWGKGESELLVRLVDEAEIQNLNKVYRYKDEPTNVLSFPTDLPIEIDEKILGDVVICIQIVLKESIEQHKSFNNHLMHMAVHGTLHLLGYDHIDTKDAQNMANLERKILAKIGINNPY.

Residues H109, H113, and H119 each coordinate Zn(2+).

Belongs to the endoribonuclease YbeY family. Requires Zn(2+) as cofactor.

Its subcellular location is the cytoplasm. Single strand-specific metallo-endoribonuclease involved in late-stage 70S ribosome quality control and in maturation of the 3' terminus of the 16S rRNA. This chain is Endoribonuclease YbeY, found in Vesicomyosocius okutanii subsp. Calyptogena okutanii (strain HA).